The chain runs to 87 residues: uncharacterized protein (87 aa).

Residues 63–83 form a helical membrane-spanning segment; that stretch reads IVLALVLGVFSLVGLIFIIYF.

It is found in the membrane. This is an uncharacterized protein from Dictyostelium discoideum (Social amoeba).